We begin with the raw amino-acid sequence, 558 residues long: REST corepressor spr-1 (558 aa).

Residues 1–106 (MDLYDDDGES…KVKGPLSNTN (106 aa)) form a disordered region. The segment covering 36 to 56 (TIEENVPEVEENTLLEEDSLV) has biased composition (acidic residues). The span at 69–80 (KPSKSKRKRKRS) shows a compositional bias: basic residues. The 86-residue stretch at 107–192 (KEINVGTEFQ…SAIAEVARRN (86 aa)) folds into the ELM2 domain. The region spanning 193–244 (ELKDVWTDQEITLFENCYQIFGKNFSQIRSALCHRSLQSIVQFYYESKKRVK) is the SANT 1 domain. The GATA-type zinc finger occupies 271-325 (AIFESMCDNCGEKAENMQINNAMNRPECRACLIYFNQTGVPRPTSLRLVLAERIR). Over residues 378 to 402 (CTENGNVGETSSPSAQKTEIQSESD) the composition is skewed to polar residues. The segment at 378 to 406 (CTENGNVGETSSPSAQKTEIQSESDGSGP) is disordered. Residues 481 to 532 (HYSQDWTQLERSQVIRCFNMYGAHFEHIADVIGTKTPDQVYQFYLENQKAID) enclose the SANT 2 domain.

This sequence belongs to the CoREST family. In terms of assembly, probably part of a large repressor complex. Interacts with histone demethylase spr-5/lsd-1.

It localises to the nucleus. Functionally, probable corepressor protein, which probably participates in the transcriptional repression of the presenilin protein hop-1. Probably acts via the formation of a multiprotein complex that deacetylates and demethylates specific sites on histones. Acts redundantly with the transcriptional repressor lin-35 to play a role in vulval morphogenesis and promote germline proliferation. This Caenorhabditis elegans protein is REST corepressor spr-1.